Reading from the N-terminus, the 219-residue chain is Leucyl/phenylalanyl-tRNA--protein transferase (219 aa).

Belongs to the L/F-transferase family.

Its subcellular location is the cytoplasm. It catalyses the reaction N-terminal L-lysyl-[protein] + L-leucyl-tRNA(Leu) = N-terminal L-leucyl-L-lysyl-[protein] + tRNA(Leu) + H(+). It carries out the reaction N-terminal L-arginyl-[protein] + L-leucyl-tRNA(Leu) = N-terminal L-leucyl-L-arginyl-[protein] + tRNA(Leu) + H(+). The enzyme catalyses L-phenylalanyl-tRNA(Phe) + an N-terminal L-alpha-aminoacyl-[protein] = an N-terminal L-phenylalanyl-L-alpha-aminoacyl-[protein] + tRNA(Phe). Functions in the N-end rule pathway of protein degradation where it conjugates Leu, Phe and, less efficiently, Met from aminoacyl-tRNAs to the N-termini of proteins containing an N-terminal arginine or lysine. The sequence is that of Leucyl/phenylalanyl-tRNA--protein transferase from Leptospira borgpetersenii serovar Hardjo-bovis (strain JB197).